A 35-amino-acid polypeptide reads, in one-letter code: Conotoxin Cal6.1g (35 aa).

The propeptide occupies 1-8; it reads GLSRPSKR. Disulfide bonds link Cys9–Cys25, Cys16–Cys29, and Cys24–Cys34.

Belongs to the conotoxin O1 superfamily. As to expression, expressed by the venom duct.

It localises to the secreted. Probable neurotoxin with unknown target. Possibly targets ion channels. This Californiconus californicus (California cone) protein is Conotoxin Cal6.1g.